We begin with the raw amino-acid sequence, 370 residues long: Nociceptin receptor (370 aa).

Topologically, residues 1 to 48 (MESLFPAPFWEVLYGSPLQGNLSLLSPNHSLLPPHLLLNASHGAFLPL) are extracellular. Residues N21, N28, and N39 are each glycosylated (N-linked (GlcNAc...) asparagine). Residues 49-74 (GLKVTIVGLYLAVCVGGLLGNCLVMY) form a helical membrane-spanning segment. The Cytoplasmic portion of the chain corresponds to 75-87 (VILRHTKMKTATN). A helical membrane pass occupies residues 88-109 (IYIFNLALADTAVLLTLPFQGT). Residues 110 to 124 (DVLLGFWPFGNALCK) lie on the Extracellular side of the membrane. C123 and C200 are joined by a disulfide. Residues 125–146 (AVIAIDYYNMFTSAFTLTAMSV) traverse the membrane as a helical segment. Residues 147-165 (DRYVAICHPIRALDVRTSS) lie on the Cytoplasmic side of the membrane. A helical transmembrane segment spans residues 166–188 (KAQAVNVAIWALASIVGVPVAIM). Topologically, residues 189 to 211 (GSAQVEDEEIECLVEIPAPQDYW) are extracellular. The chain crosses the membrane as a helical span at residues 212-236 (GPVFAVCIFLFSFVIPVLIISVCYS). The Cytoplasmic portion of the chain corresponds to 237–264 (LMVRRLRGVRLLSGSREKDRNLRRITRL). The helical transmembrane segment at 265–285 (VLVVVAVFVGCWTPVQVFVLV) threads the bilayer. Over 286-300 (QGLGVQPGSETAVAV) the chain is Extracellular. Residues 301 to 322 (LRFCTALGYVNSCLNPILYAFL) traverse the membrane as a helical segment. Topologically, residues 323–370 (DENFKACFRKFCCAPTRRREMQVSDRVRSIAKDVALACKTSETVPRPA) are cytoplasmic. The S-palmitoyl cysteine moiety is linked to residue C334.

This sequence belongs to the G-protein coupled receptor 1 family. Post-translationally, phosphorylation at Ser-363 requires GRK3. Detected in brain cortex, stomach, ileum, jejunum and colon.

It localises to the cell membrane. It is found in the cytoplasmic vesicle. G-protein coupled opioid receptor that functions as a receptor for the endogenous neuropeptide nociceptin. Ligand binding causes a conformation change that triggers signaling via guanine nucleotide-binding proteins (G proteins) and modulates the activity of down-stream effectors. Signaling via G proteins mediates inhibition of adenylate cyclase activity and calcium channel activity. Arrestins modulate signaling via G proteins and mediate the activation of alternative signaling pathways that lead to the activation of MAP kinases. Plays a role in modulating nociception and the perception of pain. Plays a role in the regulation of locomotor activity by the neuropeptide nociceptin. The chain is Nociceptin receptor (OPRL1) from Sus scrofa (Pig).